A 248-amino-acid polypeptide reads, in one-letter code: Myelin protein P0 (248 aa).

The first 29 residues, 1-29 (MAPGAPSSSPSPILAVLLFSSLVLSPAQA), serve as a signal peptide directing secretion. An Ig-like V-type domain is found at 30–143 (IVVYTDREVH…DIVGKTSQVT (114 aa)). Over 30 to 153 (IVVYTDREVH…LYVFEKVPTR (124 aa)) the chain is Extracellular. Cysteines 50 and 127 form a disulfide. N-linked (GlcNAc...) (complex) asparagine glycosylation is present at N122. A helical transmembrane segment spans residues 154–179 (YGVVLGAVIGGVLGVVLLLLLLFYVV). Residues 180–248 (RYCWLRRQAA…GLGESRKDKK (69 aa)) lie on the Cytoplasmic side of the membrane. Position 210 is a phosphoserine; by PKC (S210). The tract at residues 224-248 (DHSRSTKAVSEKKAKGLGESRKDKK) is disordered. 2 positions are modified to phosphoserine: S226 and S228. Residues S233 and S243 each carry the phosphoserine; by PKC modification.

It belongs to the myelin P0 protein family. In terms of assembly, homodimer and homotetramer. N-glycosylated; contains sulfate-substituted glycan. In terms of tissue distribution, found only in peripheral nervous system Schwann cells.

It is found in the cell membrane. The protein resides in the myelin membrane. Functionally, is an adhesion molecule necessary for normal myelination in the peripheral nervous system. It mediates adhesion between adjacent myelin wraps and ultimately drives myelin compaction. This Homo sapiens (Human) protein is Myelin protein P0 (MPZ).